We begin with the raw amino-acid sequence, 276 residues long: NADPH-dependent 7-cyano-7-deazaguanine reductase (276 aa).

80 to 82 contributes to the substrate binding site; sequence VES. NADPH is bound at residue 82-83; sequence SK. The active-site Thioimide intermediate is Cys-183. The Proton donor role is filled by Asp-190. 222–223 is a binding site for substrate; it reads HE. 251–252 is an NADPH binding site; the sequence is RG.

This sequence belongs to the GTP cyclohydrolase I family. QueF type 2 subfamily. In terms of assembly, homodimer.

The protein resides in the cytoplasm. It catalyses the reaction 7-aminomethyl-7-carbaguanine + 2 NADP(+) = 7-cyano-7-deazaguanine + 2 NADPH + 3 H(+). It functions in the pathway tRNA modification; tRNA-queuosine biosynthesis. Catalyzes the NADPH-dependent reduction of 7-cyano-7-deazaguanine (preQ0) to 7-aminomethyl-7-deazaguanine (preQ1). This is NADPH-dependent 7-cyano-7-deazaguanine reductase from Burkholderia cenocepacia (strain HI2424).